The chain runs to 210 residues: MPPYTIVYFPVRGRCEAMRMLLADQGQSWKEEVVTIDTWMQGLLKPTCLYGQLPKFEDGDLTLYQSNAILRHLGRSLGLYGKNQREAAQMDMVNDGVEDLRGKYVTLIYTNYENGKNDYVKALPGHLKPFETLLSQNQGGKAFIVGDQISFADYNLLDLLLIHQVLAPGCLDNFPLLSAYVARLSARPKIKAFLSSPEHVNRPINGNGKQ.

In terms of domain architecture, GST N-terminal spans 2–81; that stretch reads PPYTIVYFPV…HLGRSLGLYG (80 aa). Position 4 is a phosphotyrosine; by EGFR (Y4). Residues Y8, R14, W39, K45, and 52 to 53 contribute to the glutathione site; that span reads QL. Residue T62 is modified to Phosphothreonine. A glutathione-binding site is contributed by 65–66; it reads QS. The GST C-terminal domain occupies 83-204; sequence NQREAAQMDM…SSPEHVNRPI (122 aa). Residues K103 and K116 each carry the N6-succinyllysine modification. Position 128 is an N6-acetyllysine (K128).

In terms of assembly, homodimer. Interacts with CDK5. Ubiquitously expressed.

The protein localises to the cytoplasm. It localises to the mitochondrion. It is found in the nucleus. It catalyses the reaction RX + glutathione = an S-substituted glutathione + a halide anion + H(+). It carries out the reaction prostaglandin J2 + glutathione = prostaglandin J2-S-(R)-glutathione. The catalysed reaction is prostaglandin J2 + glutathione = prostaglandin J2-S-(S)-glutathione. The enzyme catalyses prostaglandin A2 + glutathione = prostaglandin A2-S-(S)-glutathione. It catalyses the reaction 11(S)-hydroxy-14(S),15(S)-epoxy-(5Z,8Z,12E)-eicosatrienoate + glutathione = (11S,15S)-dihydroxy-14(R)-S-glutathionyl-(5Z,8Z,12E)-eicosatrienoate. Conjugation of reduced glutathione to a wide number of exogenous and endogenous hydrophobic electrophiles. Involved in the formation of glutathione conjugates of both prostaglandin A2 (PGA2) and prostaglandin J2 (PGJ2). Participates in the formation of novel hepoxilin regioisomers. Negatively regulates CDK5 activity via p25/p35 translocation to prevent neurodegeneration. The chain is Glutathione S-transferase P 1 from Mus musculus (Mouse).